Here is a 356-residue protein sequence, read N- to C-terminus: Histidinol-phosphate aminotransferase (356 aa).

N6-(pyridoxal phosphate)lysine is present on Lys-214.

This sequence belongs to the class-II pyridoxal-phosphate-dependent aminotransferase family. Histidinol-phosphate aminotransferase subfamily. Homodimer. It depends on pyridoxal 5'-phosphate as a cofactor.

It catalyses the reaction L-histidinol phosphate + 2-oxoglutarate = 3-(imidazol-4-yl)-2-oxopropyl phosphate + L-glutamate. The protein operates within amino-acid biosynthesis; L-histidine biosynthesis; L-histidine from 5-phospho-alpha-D-ribose 1-diphosphate: step 7/9. This is Histidinol-phosphate aminotransferase from Escherichia coli O9:H4 (strain HS).